Here is a 178-residue protein sequence, read N- to C-terminus: Inner membrane-spanning protein YciB (178 aa).

Helical transmembrane passes span 22–42 (IFYASGALIAATGLAVAMTYF), 50–70 (ASLITFIMVAVFGTLTLAFHS), 72–92 (LFIKWKVTVIYALFALALLGS), 121–141 (MAWALFFTACALANIYVAFWL), and 149–169 (FKVFGLTALTLVFTVLSVVYI).

This sequence belongs to the YciB family.

It is found in the cell inner membrane. Functionally, plays a role in cell envelope biogenesis, maintenance of cell envelope integrity and membrane homeostasis. The chain is Inner membrane-spanning protein YciB from Photorhabdus laumondii subsp. laumondii (strain DSM 15139 / CIP 105565 / TT01) (Photorhabdus luminescens subsp. laumondii).